Reading from the N-terminus, the 34-residue chain is Photosystem II reaction center protein M (34 aa).

Residues 5–25 traverse the membrane as a helical segment; sequence ILGLIATALFIIIPTSFLLIL.

The protein belongs to the PsbM family. As to quaternary structure, PSII is composed of 1 copy each of membrane proteins PsbA, PsbB, PsbC, PsbD, PsbE, PsbF, PsbH, PsbI, PsbJ, PsbK, PsbL, PsbM, PsbT, PsbX, PsbY, PsbZ, Psb30/Ycf12, at least 3 peripheral proteins of the oxygen-evolving complex and a large number of cofactors. It forms dimeric complexes.

The protein resides in the plastid. Its subcellular location is the chloroplast thylakoid membrane. Functionally, one of the components of the core complex of photosystem II (PSII). PSII is a light-driven water:plastoquinone oxidoreductase that uses light energy to abstract electrons from H(2)O, generating O(2) and a proton gradient subsequently used for ATP formation. It consists of a core antenna complex that captures photons, and an electron transfer chain that converts photonic excitation into a charge separation. This subunit is found at the monomer-monomer interface. The polypeptide is Photosystem II reaction center protein M (Nephroselmis olivacea (Green alga)).